Consider the following 630-residue polypeptide: Alpha-1,4-glucan:maltose-1-phosphate maltosyltransferase (630 aa).

Positions 234, 294, and 329 each coordinate alpha-maltose 1-phosphate. The active-site Nucleophile is the D365. Alpha-maltose 1-phosphate is bound at residue N366. Catalysis depends on E394, which acts as the Proton donor. An alpha-maltose 1-phosphate-binding site is contributed by 504-505 (KY).

This sequence belongs to the glycosyl hydrolase 13 family. GlgE subfamily. As to quaternary structure, homodimer.

It carries out the reaction alpha-maltose 1-phosphate + [(1-&gt;4)-alpha-D-glucosyl](n) = [(1-&gt;4)-alpha-D-glucosyl](n+2) + phosphate. Maltosyltransferase that uses maltose 1-phosphate (M1P) as the sugar donor to elongate linear or branched alpha-(1-&gt;4)-glucans. Is involved in a branched alpha-glucan biosynthetic pathway from trehalose, together with TreS, Mak and GlgB. In Picrophilus torridus (strain ATCC 700027 / DSM 9790 / JCM 10055 / NBRC 100828 / KAW 2/3), this protein is Alpha-1,4-glucan:maltose-1-phosphate maltosyltransferase.